The chain runs to 694 residues: Elongation factor G (694 aa).

In terms of domain architecture, tr-type G spans 10–285 (EKTRNIGIMA…AVLDYLPSPV (276 aa)). Residues 19–26 (AHIDAGKT), 83–87 (DTPGH), and 137–140 (NKMD) contribute to the GTP site.

The protein belongs to the TRAFAC class translation factor GTPase superfamily. Classic translation factor GTPase family. EF-G/EF-2 subfamily.

It localises to the cytoplasm. Functionally, catalyzes the GTP-dependent ribosomal translocation step during translation elongation. During this step, the ribosome changes from the pre-translocational (PRE) to the post-translocational (POST) state as the newly formed A-site-bound peptidyl-tRNA and P-site-bound deacylated tRNA move to the P and E sites, respectively. Catalyzes the coordinated movement of the two tRNA molecules, the mRNA and conformational changes in the ribosome. This chain is Elongation factor G, found in Limosilactobacillus fermentum (strain NBRC 3956 / LMG 18251) (Lactobacillus fermentum).